Here is a 348-residue protein sequence, read N- to C-terminus: Elongation factor Ts (348 aa).

The segment at 82-85 (TDFV) is involved in Mg(2+) ion dislocation from EF-Tu.

This sequence belongs to the EF-Ts family.

It localises to the cytoplasm. Its function is as follows. Associates with the EF-Tu.GDP complex and induces the exchange of GDP to GTP. It remains bound to the aminoacyl-tRNA.EF-Tu.GTP complex up to the GTP hydrolysis stage on the ribosome. The sequence is that of Elongation factor Ts from Aliarcobacter butzleri (strain RM4018) (Arcobacter butzleri).